The following is a 294-amino-acid chain: Putative cuticle collagen 145 (294 aa).

The first 30 residues, 1 to 30 (MEKILVTFSTGAASIAVLAVLFTVPSLYNT), serve as a signal peptide directing secretion. A compositionally biased stretch (pro residues) spans 100–112 (TCPPGPPGPPGQP). 2 disordered regions span residues 100-133 (TCPPGPPGPPGQPGAPGTPGAPGPKGDDNTATFA) and 148-276 (PQGP…LPGN). Triple-helical region stretches follow at residues 102-127 (PPGPPGPPGQPGAPGTPGAPGPKGDD) and 148-277 (PQGP…PGND). Composition is skewed to low complexity over residues 164 to 194 (AGPDGQPGFPGQRGNDGFPGAPGAPGDNGQP) and 219 to 265 (APGA…DGQP). Residues 218-276 (GAPGAPGNAGPAGPAGQDGFPGQDGAPGPAGPAGQDGFPGNAGSDGQPGAPGGPGLPGN) form the Collagen-like domain.

It belongs to the cuticular collagen family. As to quaternary structure, collagen polypeptide chains are complexed within the cuticle by disulfide bonds and other types of covalent cross-links.

Nematode cuticles are composed largely of collagen-like proteins. The cuticle functions both as an exoskeleton and as a barrier to protect the worm from its environment. The sequence is that of Putative cuticle collagen 145 (col-145) from Caenorhabditis elegans.